A 466-amino-acid chain; its full sequence is Soluble pyridine nucleotide transhydrogenase (466 aa).

36–45 (ERYHNVGGGC) provides a ligand contact to FAD.

It belongs to the class-I pyridine nucleotide-disulfide oxidoreductase family. FAD is required as a cofactor.

It is found in the cytoplasm. The enzyme catalyses NAD(+) + NADPH = NADH + NADP(+). Conversion of NADPH, generated by peripheral catabolic pathways, to NADH, which can enter the respiratory chain for energy generation. The protein is Soluble pyridine nucleotide transhydrogenase of Salmonella paratyphi A (strain ATCC 9150 / SARB42).